A 144-amino-acid chain; its full sequence is Putative pre-16S rRNA nuclease (144 aa).

The protein belongs to the YqgF nuclease family.

Its subcellular location is the cytoplasm. Functionally, could be a nuclease involved in processing of the 5'-end of pre-16S rRNA. In Symbiobacterium thermophilum (strain DSM 24528 / JCM 14929 / IAM 14863 / T), this protein is Putative pre-16S rRNA nuclease.